Here is a 588-residue protein sequence, read N- to C-terminus: Aspartate--tRNA ligase (588 aa).

Glu172 lines the L-aspartate pocket. The aspartate stretch occupies residues 196 to 199 (QLFK). Arg218 contacts L-aspartate. ATP-binding positions include 218 to 220 (RDE) and Gln227. His449 serves as a coordination point for L-aspartate. Glu483 provides a ligand contact to ATP. An L-aspartate-binding site is contributed by Arg490. 535–538 (GLDR) contacts ATP.

This sequence belongs to the class-II aminoacyl-tRNA synthetase family. Type 1 subfamily. As to quaternary structure, homodimer.

The protein localises to the cytoplasm. It carries out the reaction tRNA(Asp) + L-aspartate + ATP = L-aspartyl-tRNA(Asp) + AMP + diphosphate. Functionally, catalyzes the attachment of L-aspartate to tRNA(Asp) in a two-step reaction: L-aspartate is first activated by ATP to form Asp-AMP and then transferred to the acceptor end of tRNA(Asp). This Pasteurella multocida (strain Pm70) protein is Aspartate--tRNA ligase.